The following is a 661-amino-acid chain: ADCQAGDSADKLLAQKQHDVNYLVYKLYGDIRDDHLKELGETFNPQGDLLLYHDNGASVNTLMADFKDGRLLQKKHWFSLFNTRQREEALMMHRVLMNCKNWHAFVSNAAYFRTNMNEGEYLYALYVSLIHSGLGEGVVLPPLYEVTPHMFTNSEVIHEAYKAQMTNTPSKFESHFTGSKKNPEQHVAYFGEDVGMNTHHVLWHMEFPFWWEDSSGRHLDRKGESFFWVHHQLTVRYDAERLSNHLDPVEELSWNKAIDEGFAPHTAYKYGGYFPSRPDNVHFSDVDGVARVRDMSMTEDRIRDAIAHGYIDALDGSHIDIMNSHGIEFLGDIIESSGYSANPGFYGSLHNTAHIMLGRQGDPTGKFDLPPGVLEHFETSTRDPSFFRLHKYMDNIFREHKDSLTPYTRDELEFNGVSIDSIAIEGTLETFFENFEYSLLNAVDDTVDIADVEILTYIERLNHKKFSFLILVTNNNNTEVLATVRIFAWPLRDNNGIEYSFNEGRWRALELDRFWVKVKHGHHQITRQSTESSVTVPDVPSLQTLIDRADAAISSGCALHLEDYESALGLPNRFLLPKGQAQGMEFNLVVAVTDGRTDAALDDLHENTKFIHYGYDRQYPDKRPHGYPLDRRVDDERIFEALPNFKQRTVKLYSHEGVDGG.

C3 and C557 are disulfide-bonded. 6 residues coordinate Cu cation: H200, H204, H230, H350, H354, and H390. Residue N476 is glycosylated (N-linked (GlcNAc...) asparagine).

It belongs to the tyrosinase family. Hemocyanin subfamily. As to quaternary structure, hexamer of a number of different chains, of which A, B, and C have been identified. As to expression, hemolymph.

The protein resides in the secreted. The protein localises to the extracellular space. Functionally, hemocyanins are copper-containing oxygen carriers occurring freely dissolved in the hemolymph of many mollusks and arthropods. This Panulirus interruptus (California spiny lobster) protein is Hemocyanin C chain.